Consider the following 357-residue polypeptide: Molybdenum import ATP-binding protein ModC (357 aa).

Residues 1–233 (MRLEVEARLR…PFPTSGPGRR (233 aa)) enclose the ABC transporter domain. ATP is bound at residue 31 to 38 (GRSGSGKT). Positions 293-357 (GISALNVLPG…AVVKTVALDY (65 aa)) constitute a Mop domain.

It belongs to the ABC transporter superfamily. Molybdate importer (TC 3.A.1.8) family. As to quaternary structure, the complex is composed of two ATP-binding proteins (ModC), two transmembrane proteins (ModB) and a solute-binding protein (ModA).

It localises to the cell inner membrane. The enzyme catalyses molybdate(out) + ATP + H2O = molybdate(in) + ADP + phosphate + H(+). Functionally, part of the ABC transporter complex ModABC involved in molybdenum import. Responsible for energy coupling to the transport system. This chain is Molybdenum import ATP-binding protein ModC, found in Rhizobium meliloti (strain 1021) (Ensifer meliloti).